We begin with the raw amino-acid sequence, 3122 residues long: Laminin subunit alpha-2 (3122 aa).

The signal sequence occupies residues 1-22 (MPGAAGVLLLLLLSGGLGGVQA). A Laminin N-terminal domain is found at 35 to 286 (QQRGLFPAVL…SVKDISVGGM (252 aa)). Residues asparagine 55 and asparagine 89 are each glycosylated (N-linked (GlcNAc...) asparagine). Intrachain disulfides connect cysteine 287–cysteine 296, cysteine 289–cysteine 307, cysteine 309–cysteine 318, cysteine 321–cysteine 341, cysteine 344–cysteine 353, and cysteine 346–cysteine 378. Laminin EGF-like domains follow at residues 287–343 (CICY…ECEA), 344–413 (CNCH…PCQP), 414–468 (CHCD…DCKA), and 469–517 (CNCS…GCDE). A glycan (N-linked (GlcNAc...) asparagine) is linked at asparagine 303. 2 N-linked (GlcNAc...) asparagine glycosylation sites follow: asparagine 363 and asparagine 380. 10 cysteine pairs are disulfide-bonded: cysteine 381-cysteine 390, cysteine 393-cysteine 411, cysteine 414-cysteine 426, cysteine 416-cysteine 442, cysteine 444-cysteine 453, cysteine 456-cysteine 466, cysteine 469-cysteine 482, cysteine 471-cysteine 486, cysteine 488-cysteine 497, and cysteine 500-cysteine 515. A glycan (N-linked (GlcNAc...) asparagine) is linked at asparagine 470. The Laminin EGF-like 5; first part domain occupies 518–527 (CFCSGVSNRC). The Laminin IV type A 1 domain maps to 531 to 723 (YWTYGKIQDM…DGSIAAAVEV (193 aa)). In terms of domain architecture, Laminin EGF-like 5; second part spans 724–756 (CQCPPGYTGSSCESCWPRHRRVNGTIFGGICEP). N-linked (GlcNAc...) asparagine glycosylation is present at asparagine 746. Intrachain disulfides connect cysteine 757–cysteine 766, cysteine 759–cysteine 773, cysteine 776–cysteine 785, cysteine 788–cysteine 804, cysteine 807–cysteine 822, cysteine 809–cysteine 832, cysteine 835–cysteine 844, cysteine 847–cysteine 862, cysteine 865–cysteine 879, cysteine 867–cysteine 886, cysteine 889–cysteine 898, cysteine 901–cysteine 915, cysteine 918–cysteine 930, cysteine 920–cysteine 937, cysteine 939–cysteine 948, cysteine 951–cysteine 964, cysteine 967–cysteine 979, cysteine 969–cysteine 985, cysteine 987–cysteine 996, cysteine 999–cysteine 1011, cysteine 1014–cysteine 1023, cysteine 1016–cysteine 1030, cysteine 1032–cysteine 1041, cysteine 1044–cysteine 1057, cysteine 1060–cysteine 1072, cysteine 1062–cysteine 1079, cysteine 1081–cysteine 1090, cysteine 1093–cysteine 1103, cysteine 1106–cysteine 1118, cysteine 1108–cysteine 1134, cysteine 1136–cysteine 1145, and cysteine 1148–cysteine 1163. Laminin EGF-like domains follow at residues 757-806 (CQCF…DCQP), 807-864 (CACP…SCQP), 865-917 (CQCN…NCQP), 918-966 (CRCN…GCVP), 967-1013 (CNCN…GCTA), 1014-1059 (CECS…GCKA), 1060-1105 (CNCS…RCNL), and 1106-1165 (CDCF…GCSS). The N-linked (GlcNAc...) asparagine glycan is linked to asparagine 1061. Positions 1166–1175 (CYCFGTTTQC) constitute a Laminin EGF-like 14; first part domain. Residues 1176-1379 (SEAKGLIRTW…MTPPADLIEK (204 aa)) enclose the Laminin IV type A 2 domain. The 40-residue stretch at 1380–1419 (CDCPLGYSGLSCEACLPGFYRLRSQPGGRTPGPTLGTCVP) folds into the Laminin EGF-like 14; second part domain. 12 cysteine pairs are disulfide-bonded: cysteine 1420-cysteine 1429, cysteine 1422-cysteine 1436, cysteine 1439-cysteine 1448, cysteine 1451-cysteine 1466, cysteine 1469-cysteine 1484, cysteine 1471-cysteine 1494, cysteine 1497-cysteine 1506, cysteine 1509-cysteine 1524, cysteine 1527-cysteine 1539, cysteine 1529-cysteine 1546, cysteine 1548-cysteine 1557, and cysteine 1560-cysteine 1571. Laminin EGF-like domains lie at 1420-1468 (CQCN…DCQQ), 1469-1526 (CACP…SCQE), and 1527-1573 (CECD…ECVF). The domain II and I stretch occupies residues 1574-2144 (CGDECTGLLL…NQARKQANSI (571 aa)). Residues asparagine 1597, asparagine 1614, asparagine 1700, asparagine 1810, asparagine 1901, asparagine 1916, asparagine 1920, asparagine 2017, asparagine 2028, asparagine 2045, asparagine 2126, and asparagine 2240 are each glycosylated (N-linked (GlcNAc...) asparagine). Residues 1630–2150 (ERLIQLAEGN…ANSIKVSVSS (521 aa)) adopt a coiled-coil conformation. Laminin G-like domains lie at 2145–2328 (KVSV…CKGC), 2340–2521 (TIQF…TKGC), 2526–2710 (VYTV…IGRC), 2763–2934 (SKQF…VGTC), and 2939–3110 (QRGT…KALE). Cysteine 2302 and cysteine 2328 are joined by a disulfide. Residues asparagine 2360, asparagine 2435, and asparagine 2478 are each glycosylated (N-linked (GlcNAc...) asparagine). A disulfide bond links cysteine 2495 and cysteine 2521. 3 N-linked (GlcNAc...) asparagine glycosylation sites follow: asparagine 2551, asparagine 2558, and asparagine 2648. The cysteines at positions 2683 and 2710 are disulfide-linked. N-linked (GlcNAc...) asparagine glycans are attached at residues asparagine 2868 and asparagine 2893. An intrachain disulfide couples cysteine 2909 to cysteine 2934. Residues 3043–3060 (GNQVEAQSPNPASTSADT) show a composition bias toward polar residues. Residues 3043–3063 (GNQVEAQSPNPASTSADTNDP) form a disordered region.

As to quaternary structure, laminin is a complex glycoprotein, consisting of three different polypeptide chains (alpha, beta, gamma), which are bound to each other by disulfide bonds into a cross-shaped molecule comprising one long and three short arms with globules at each end. Alpha-2 is a subunit of laminin-2 (laminin-211 or merosin), laminin-4 (laminin-221 or S-merosin) and laminin-12 (laminin-213). Interacts with FBLN1, FBLN2 and NID2. In terms of tissue distribution, placenta, striated muscle, peripheral nerve, cardiac muscle, pancreas, lung, spleen, kidney, adrenal gland, skin, testis, meninges, choroid plexus, and some other regions of the brain; not in liver, thymus and bone.

It is found in the secreted. The protein localises to the extracellular space. The protein resides in the extracellular matrix. Its subcellular location is the basement membrane. Its function is as follows. Binding to cells via a high affinity receptor, laminin is thought to mediate the attachment, migration and organization of cells into tissues during embryonic development by interacting with other extracellular matrix components. The protein is Laminin subunit alpha-2 (LAMA2) of Homo sapiens (Human).